Here is an 879-residue protein sequence, read N- to C-terminus: Valine--tRNA ligase (879 aa).

Positions 45-55 match the 'HIGH' region motif; it reads PNVTGKLHLGH. The 'KMSKS' region motif lies at 521–525; it reads KMSKS. Lys524 contacts ATP. Residues 806 to 879 are a coiled coil; that stretch reads LTELVNVDEE…ERIQDLKESK (74 aa).

Belongs to the class-I aminoacyl-tRNA synthetase family. ValS type 1 subfamily. Monomer.

The protein resides in the cytoplasm. The catalysed reaction is tRNA(Val) + L-valine + ATP = L-valyl-tRNA(Val) + AMP + diphosphate. Functionally, catalyzes the attachment of valine to tRNA(Val). As ValRS can inadvertently accommodate and process structurally similar amino acids such as threonine, to avoid such errors, it has a 'posttransfer' editing activity that hydrolyzes mischarged Thr-tRNA(Val) in a tRNA-dependent manner. This is Valine--tRNA ligase from Lactobacillus acidophilus (strain ATCC 700396 / NCK56 / N2 / NCFM).